The following is a 95-amino-acid chain: Aspartyl/glutamyl-tRNA(Asn/Gln) amidotransferase subunit C (95 aa).

It belongs to the GatC family. As to quaternary structure, heterotrimer of A, B and C subunits.

It carries out the reaction L-glutamyl-tRNA(Gln) + L-glutamine + ATP + H2O = L-glutaminyl-tRNA(Gln) + L-glutamate + ADP + phosphate + H(+). The catalysed reaction is L-aspartyl-tRNA(Asn) + L-glutamine + ATP + H2O = L-asparaginyl-tRNA(Asn) + L-glutamate + ADP + phosphate + 2 H(+). Allows the formation of correctly charged Asn-tRNA(Asn) or Gln-tRNA(Gln) through the transamidation of misacylated Asp-tRNA(Asn) or Glu-tRNA(Gln) in organisms which lack either or both of asparaginyl-tRNA or glutaminyl-tRNA synthetases. The reaction takes place in the presence of glutamine and ATP through an activated phospho-Asp-tRNA(Asn) or phospho-Glu-tRNA(Gln). The polypeptide is Aspartyl/glutamyl-tRNA(Asn/Gln) amidotransferase subunit C (Acidiphilium cryptum (strain JF-5)).